Consider the following 69-residue polypeptide: Pleurain-A1 (69 aa).

The signal sequence occupies residues 1 to 18; that stretch reads MFTLKKTLLLLFFLGTIS. The propeptide occupies 19–43; sequence ISLCKQERDADEDDGRKMTEEEVKR. C63 and C69 are joined by a disulfide.

Expressed by the skin glands.

It localises to the secreted. Functionally, antimicrobial peptide. Has activity against the Gram-positive bacterium S.aureus ATCC2592 (MIC=15 ug/ml), the Gram-negative bacteria E.coli ATCC25922 (MIC=60 ug/ml), B.dysenteriae (MIC=120 ug/ml), H.pylori NTCT11637 (MIC=30 ug/ml), and the fungus C.albicans ATCC2002 (MIC=30 ug/ml). Has little hemolytic activity on rabbit red blood cells. The sequence is that of Pleurain-A1 from Nidirana pleuraden (Yunnan pond frog).